The following is a 707-amino-acid chain: MVQKYQSPVRVYKYPFELVMAAYEKRFPTCPQIPVFLGSDILQEHKSEDGALHVVERSCKLNVDAPRLLKKIAGVEFVYFIQKNTVNWKDRTLLIEAHNETFSSRVLVNETCSYSVHPENEEWTCFEQTASLDIKSFFGFESTVEKIAMKQYTANIKRGKEVIEFYLNELISQGITHLPKWTPGVPAGWHPLQAFRSGITRSNQAEQTASQGPCKADAGSHSLAAEPSTPDTDKLEADYIERYLGQLTPMQESALIHLRQWLQETHKGKIPKDEHILRFLRARDFNMEKAREMLCQSLSWRKQHQVDYILQTWQPPRVLEEYYAGGWHYHDKDGRPLYILRLGQVDTKGLVKALGEEAILRHVLSINEEGQKRCEENTRQFGRPIWSWTCLVDLEGLNMRHLWRPGVKALLRIIEVVEANYPETLGRLLIVRAPRVFPVLWTLVSPFINENSRQKFLIYSGNNYQGPGGIADYVDKEIVPDFLGGECVCNIPEGGLVPKSLYQSDEDAEMSDHIRLWTETIYQSSCVWKGAPHEIIVEILEEESVITWDFDILRGDVIFSLFHSKRAPDTRQRELALAAGNAPSSNVQLIDKSWTLGVDYSRVQAPLVCREGESIQGSHVTRWPGIYILQWKMHSSASGSSMARVDDVLASLQGSSHKCKLMYYFEVLASEDFRGSMSSLESCSGFSQLSGVTNTSSKSHSSSLISR.

Positions 3-175 constitute a PRELI/MSF1 domain; it reads QKYQSPVRVY…YLNELISQGI (173 aa). Over residues 201 to 211 the composition is skewed to polar residues; the sequence is RSNQAEQTASQ. Residues 201–232 form a disordered region; that stretch reads RSNQAEQTASQGPCKADAGSHSLAAEPSTPDT. In terms of domain architecture, CRAL-TRIO spans 315 to 491; the sequence is PPRVLEEYYA…FLGGECVCNI (177 aa). One can recognise a GOLD domain in the interval 518–667; that stretch reads TETIYQSSCV…KCKLMYYFEV (150 aa). Residues 686–695 show a composition bias toward polar residues; that stretch reads FSQLSGVTNT. The segment at 686–707 is disordered; it reads FSQLSGVTNTSSKSHSSSLISR. Over residues 696-707 the composition is skewed to low complexity; it reads SSKSHSSSLISR.

The sequence is that of SEC14-like protein 5 (sec14l1) from Xenopus tropicalis (Western clawed frog).